The primary structure comprises 138 residues: Large ribosomal subunit protein uL16 (138 aa).

A compositionally biased stretch (basic residues) spans 1–21; that stretch reads MLIPRKVKHRKQHHPSLRGRA. The disordered stretch occupies residues 1 to 22; it reads MLIPRKVKHRKQHHPSLRGRAK.

This sequence belongs to the universal ribosomal protein uL16 family. In terms of assembly, part of the 50S ribosomal subunit.

Functionally, binds 23S rRNA and is also seen to make contacts with the A and possibly P site tRNAs. The polypeptide is Large ribosomal subunit protein uL16 (Thermobifida fusca (strain YX)).